The sequence spans 203 residues: Putative 3-methyladenine DNA glycosylase (203 aa).

Belongs to the DNA glycosylase MPG family.

The protein is Putative 3-methyladenine DNA glycosylase of Clostridium botulinum (strain ATCC 19397 / Type A).